Consider the following 145-residue polypeptide: Ribonuclease H (145 aa).

One can recognise an RNase H type-1 domain in the interval 1–142; that stretch reads MDTPVYLYTD…ADDLANRGAA (142 aa). Asp10, Glu48, Asp70, and Asp134 together coordinate Mg(2+).

It belongs to the RNase H family. Monomer. The cofactor is Mg(2+).

Its subcellular location is the cytoplasm. The catalysed reaction is Endonucleolytic cleavage to 5'-phosphomonoester.. Endonuclease that specifically degrades the RNA of RNA-DNA hybrids. This chain is Ribonuclease H, found in Neisseria gonorrhoeae (strain ATCC 700825 / FA 1090).